Here is a 199-residue protein sequence, read N- to C-terminus: MPADTAPMNLTHHFLIAMPGVEDASFSRSVVYLCEHSERGALGLIINKPTPISLEGLFEKVDLSLGREDLTLQPVFQGGPVQTERGFVLHEAMRGPQESEDESPYASTMTIPGGLEMTTSKDVLEALAHGAGPRRVLVTLGYSAWGEGQLESELAENSWLTVGADVSVIFETPVQERYDRALGLLGLQSWMLSPEAGHA.

Belongs to the UPF0301 (AlgH) family.

The protein is UPF0301 protein Ajs_3573 of Acidovorax sp. (strain JS42).